The following is a 438-amino-acid chain: tRNA(Ile)-lysidine synthase (438 aa).

Position 26 to 31 (26 to 31 (SGGADS)) interacts with ATP.

The protein belongs to the tRNA(Ile)-lysidine synthase family.

The protein resides in the cytoplasm. It carries out the reaction cytidine(34) in tRNA(Ile2) + L-lysine + ATP = lysidine(34) in tRNA(Ile2) + AMP + diphosphate + H(+). Its function is as follows. Ligates lysine onto the cytidine present at position 34 of the AUA codon-specific tRNA(Ile) that contains the anticodon CAU, in an ATP-dependent manner. Cytidine is converted to lysidine, thus changing the amino acid specificity of the tRNA from methionine to isoleucine. The protein is tRNA(Ile)-lysidine synthase of Parabacteroides distasonis (strain ATCC 8503 / DSM 20701 / CIP 104284 / JCM 5825 / NCTC 11152).